The sequence spans 163 residues: Staphylokinase (163 aa).

Positions Met-1–Ala-27 are cleaved as a signal peptide.

This sequence belongs to the staphylokinase family.

It is found in the secreted. Functionally, potent plasminogen activator that converts plasminogen into plasmin. It forms a 1:1 complex with plasmin, which in turn activates other plasminogen molecules. The protein is Staphylokinase (sak) of Staphylococcus aureus (Bacteriophage P42D).